Reading from the N-terminus, the 231-residue chain is 5'-methylthioadenosine/S-adenosylhomocysteine nucleosidase (231 aa).

Glu12 (proton acceptor) is an active-site residue. Substrate-binding positions include Gly78, Val153, and 174–175; that span reads ME. Asp198 acts as the Proton donor in catalysis.

This sequence belongs to the PNP/UDP phosphorylase family. MtnN subfamily.

The enzyme catalyses S-adenosyl-L-homocysteine + H2O = S-(5-deoxy-D-ribos-5-yl)-L-homocysteine + adenine. The catalysed reaction is S-methyl-5'-thioadenosine + H2O = 5-(methylsulfanyl)-D-ribose + adenine. It catalyses the reaction 5'-deoxyadenosine + H2O = 5-deoxy-D-ribose + adenine. It functions in the pathway amino-acid biosynthesis; L-methionine biosynthesis via salvage pathway; S-methyl-5-thio-alpha-D-ribose 1-phosphate from S-methyl-5'-thioadenosine (hydrolase route): step 1/2. Functionally, catalyzes the irreversible cleavage of the glycosidic bond in both 5'-methylthioadenosine (MTA) and S-adenosylhomocysteine (SAH/AdoHcy) to adenine and the corresponding thioribose, 5'-methylthioribose and S-ribosylhomocysteine, respectively. Also cleaves 5'-deoxyadenosine, a toxic by-product of radical S-adenosylmethionine (SAM) enzymes, into 5-deoxyribose and adenine. This is 5'-methylthioadenosine/S-adenosylhomocysteine nucleosidase from Aliivibrio fischeri (Vibrio fischeri).